A 371-amino-acid polypeptide reads, in one-letter code: uncharacterized protein (371 aa).

Positions 287 to 323 (EVVTALDRYRQHLRETRERLEEKQGKLLEELKGYESM) form a coiled coil.

This is an uncharacterized protein from Aspergillus fumigatus (strain ATCC MYA-4609 / CBS 101355 / FGSC A1100 / Af293) (Neosartorya fumigata).